Consider the following 369-residue polypeptide: Histidine decarboxylase (369 aa).

Substrate is bound at residue His-119. N6-(pyridoxal phosphate)lysine is present on Lys-230.

The protein belongs to the group II decarboxylase family. In terms of assembly, homotetramer. It depends on pyridoxal 5'-phosphate as a cofactor.

The catalysed reaction is L-histidine + H(+) = histamine + CO2. The polypeptide is Histidine decarboxylase (Mesorhizobium japonicum (strain LMG 29417 / CECT 9101 / MAFF 303099) (Mesorhizobium loti (strain MAFF 303099))).